Consider the following 271-residue polypeptide: NAD kinase (271 aa).

Residue Asp52 is the Proton acceptor of the active site. NAD(+)-binding positions include 52–53 (DG), 129–130 (NE), Arg155, Asp157, and Ala192.

It belongs to the NAD kinase family. A divalent metal cation is required as a cofactor.

Its subcellular location is the cytoplasm. The enzyme catalyses NAD(+) + ATP = ADP + NADP(+) + H(+). Functionally, involved in the regulation of the intracellular balance of NAD and NADP, and is a key enzyme in the biosynthesis of NADP. Catalyzes specifically the phosphorylation on 2'-hydroxyl of the adenosine moiety of NAD to yield NADP. This Geobacillus stearothermophilus (Bacillus stearothermophilus) protein is NAD kinase.